The following is a 287-amino-acid chain: Pantothenate synthetase (287 aa).

Residue 30–37 coordinates ATP; sequence MGALHEGH. His-37 acts as the Proton donor in catalysis. Gln-61 lines the (R)-pantoate pocket. A beta-alanine-binding site is contributed by Gln-61. 147 to 150 provides a ligand contact to ATP; that stretch reads GEKD. Gln-153 is a (R)-pantoate binding site. 184–187 lines the ATP pocket; sequence MSSR.

Belongs to the pantothenate synthetase family. As to quaternary structure, homodimer.

The protein localises to the cytoplasm. It carries out the reaction (R)-pantoate + beta-alanine + ATP = (R)-pantothenate + AMP + diphosphate + H(+). The protein operates within cofactor biosynthesis; (R)-pantothenate biosynthesis; (R)-pantothenate from (R)-pantoate and beta-alanine: step 1/1. Its function is as follows. Catalyzes the condensation of pantoate with beta-alanine in an ATP-dependent reaction via a pantoyl-adenylate intermediate. The sequence is that of Pantothenate synthetase from Granulibacter bethesdensis (strain ATCC BAA-1260 / CGDNIH1).